Here is a 991-residue protein sequence, read N- to C-terminus: MGVPALFRLLSRKFAKVITPVIEAPTEKLPDGTEIEPDLSLPNPNGVECDNLYLDMNGIVHPCSHPEDRPAPETEDEMMVAVFEYTDRILAMVRPRQLLFIAIDGVAPRAKMNQQRSRRFRSSREAALKEEELQAFIEEAKQQGIPIDENATKKKSWDSNCITPGTPFMDTLAKSLRYYIINKLNSDPCWRNVRFILSDASVPGEGEHKIMEFIRSQRVKPEYDPNTHHVVYGLDADLIMLGLATHEPHFRVLREDVFFQQGSTKKTKEERLGIKRLDDVSETNKVPVKKPFIWLNVSILREYLEVELYVPNLPFPFDLERAIDDWVFFIFFVGNDFLPHLPSLDIRDGAVERLTEIWRASLPHMGGYLTLDGSVNLARAEVILSAVGNQEDDIFKRLKQQEDRRNENYRRRQQRESNQESESYVDNVVIQRSVETQSTEVVTSSKSTSVDTKPPKKTQKIDAPAPVDLVNLSEKTSNRSLGATNRELINNRAANRLGLSREAAAVSSVNKLAASALKAQLVSNETLQNVPLEDSIASSSAYEDTDSIESSTPVVHPIDTKVSNVGQKRKAPDSTEENENTDTVRLYEPGYRERYYEQKFHISPDEPEKIREAVKHYVHGLCWVLLYYYQGCPSWTWYYPYHYAPFAADFKDLASIDVKFELNQPFKPYEQLLGVLPAASKNNLPEKLQTLMTDENSEIIDFYPENFTIDLNGKKFEWQGVALLPFIDENRLLNAVSKIYPQLTEEESKRNEDGSTLLFISEHHPMFSELVKQLYSKKRQGKPLKLSGKMAHGLFGKVNTNDSVIPNVSVQCPIDVTSADALQKYGSIDDNQSISLVFEVPKSHFVHKSMLLRGVKMPNRVLTPEDINQVRAERSFSSRRNNGNSYRGGHQSYGVRRSYQSQSYSSRQSYTGVTNGFANGGVQPPWSGNGNFPRSNASYNSRGGHEGYGGRSRGGGYSNGPPAGNHYSSNRGKGYGYQRESYNNNNRNGYY.

Residues 264 to 268 carry the Nuclear localization signal motif; it reads TKKTK. Positions 404–418 are enriched in basic and acidic residues; sequence RRNENYRRRQQRESN. Disordered regions lie at residues 404-461, 547-582, and 872-991; these read RRNE…TQKI, SIES…ENTD, and AERS…NGYY. Low complexity predominate over residues 433 to 452; it reads SVETQSTEVVTSSKSTSVDT. Composition is skewed to low complexity over residues 878–889 and 896–910; these read SRRNNGNSYRGG and RRSY…RQSY. Residues 926-938 show a composition bias toward polar residues; it reads WSGNGNFPRSNAS. Over residues 946–958 the composition is skewed to gly residues; that stretch reads EGYGGRSRGGGYS. Polar residues predominate over residues 980–991; that stretch reads ESYNNNNRNGYY.

Belongs to the 5'-3' exonuclease family. XRN2/RAT1 subfamily. In terms of assembly, interacts with din1/rai1; the interaction is direct, stabilizes dhp1 protein structure and may stimulate its exoribonuclease activity. The interaction also stimulates din1 pyrophosphohydrolase activity, probably by recruiting it to mRNA substrates.

The protein resides in the nucleus. In terms of biological role, possesses 5'-&gt;3' exoribonuclease activity. Required for the processing of nuclear mRNA and rRNA precursors. May promote the termination of transcription by RNA polymerase II. Essential for vegetative cell growth and chromosome segregation. The sequence is that of 5'-3' exoribonuclease 2 (dhp1) from Schizosaccharomyces pombe (strain 972 / ATCC 24843) (Fission yeast).